A 331-amino-acid chain; its full sequence is UAP56-interacting factor (331 aa).

Positions 16 to 34 (APDKVDMSLDDIIRLNKKE) match the UAP56-binding motif motif. 3 disordered regions span residues 30-51 (LNKKEQQARRPSPGNRRPLQKG), 63-99 (RARGQTQRGGGVPRGAITRAGVGRGRKIPPPVGRRRG), and 158-193 (GQRRPYRQTDIQRGLNSTRPFQQRRRPLPPVQTQRE). Over residues 166–175 (TDIQRGLNST) the composition is skewed to polar residues.

This sequence belongs to the UIF family.

The protein localises to the nucleus. The protein resides in the nucleoplasm. It is found in the nucleus speckle. Its function is as follows. Required for mRNA export from the nucleus to the cytoplasm. Acts as an adapter that uses the ddx39b/uap56-nfx1 pathway to ensure efficient mRNA export and delivering to the nuclear pore. This chain is UAP56-interacting factor (fyttd1), found in Salmo salar (Atlantic salmon).